The sequence spans 535 residues: Alcohol O-acetyltransferase 2 (535 aa).

A membrane association region spans residues glycine 19 to arginine 36. Catalysis depends on charge relay system residues histidine 189 and aspartate 193. Residues arginine 515 to phenylalanine 532 are membrane association.

Belongs to the ATF1 alcohol acetyltransferase family.

The protein localises to the lipid droplet. The protein resides in the endoplasmic reticulum membrane. It catalyses the reaction an aliphatic alcohol + acetyl-CoA = an acetyl ester + CoA. Functionally, can use acetyl-CoA to synthesize acetate esters from various alcohols, producing ethyl acetate, isoamyl acetate, isobutyl acetate, butyl acetate, hexyl acetate, heptyl acetate and octyl acetate. ATF2 seems to play only a minor role in the acetate ester synthesis, compared to ATF1. Plays an active role in the detoxification hydroxysteroids and possibly certain phytochemicals, in association with the efflux pumps PDR5 and SNQ2. This Saccharomyces cerevisiae (strain ATCC 204508 / S288c) (Baker's yeast) protein is Alcohol O-acetyltransferase 2.